Here is a 198-residue protein sequence, read N- to C-terminus: Na(+)-translocating NADH-quinone reductase subunit E (198 aa).

6 helical membrane-spanning segments follow: residues 11-31 (SIFI…FLAV), 40-60 (GLGI…NLVF), 77-97 (FLGF…LEMF), 110-130 (GIFL…SFMV), 140-160 (VVYG…MAAI), and 176-196 (LGIT…FSGI).

This sequence belongs to the NqrDE/RnfAE family. In terms of assembly, composed of six subunits; NqrA, NqrB, NqrC, NqrD, NqrE and NqrF.

The protein localises to the cell inner membrane. The catalysed reaction is a ubiquinone + n Na(+)(in) + NADH + H(+) = a ubiquinol + n Na(+)(out) + NAD(+). Functionally, NQR complex catalyzes the reduction of ubiquinone-1 to ubiquinol by two successive reactions, coupled with the transport of Na(+) ions from the cytoplasm to the periplasm. NqrA to NqrE are probably involved in the second step, the conversion of ubisemiquinone to ubiquinol. The sequence is that of Na(+)-translocating NADH-quinone reductase subunit E from Tolumonas auensis (strain DSM 9187 / NBRC 110442 / TA 4).